Reading from the N-terminus, the 228-residue chain is Phosphoglycolate phosphatase 1 (228 aa).

The active-site Nucleophile is the Asp-8. Mg(2+) contacts are provided by Asp-8 and Asp-10. Lys-149 is a binding site for substrate. Positions 172 and 176 each coordinate Mg(2+).

It belongs to the archaeal SPP-like hydrolase family. It depends on Mg(2+) as a cofactor.

It catalyses the reaction 2-phosphoglycolate + H2O = glycolate + phosphate. Functionally, catalyzes the dephosphorylation of 2-phosphoglycolate. This Saccharolobus solfataricus (strain ATCC 35092 / DSM 1617 / JCM 11322 / P2) (Sulfolobus solfataricus) protein is Phosphoglycolate phosphatase 1.